The following is a 323-amino-acid chain: Mycothiol acetyltransferase (323 aa).

2 consecutive N-acetyltransferase domains span residues 5–145 (LTTD…LPLR) and 168–323 (VEIR…PEER). A 1D-myo-inositol 2-(L-cysteinylamino)-2-deoxy-alpha-D-glucopyranoside-binding site is contributed by E36. 83–85 (VAV) lines the acetyl-CoA pocket. E195, K236, and E252 together coordinate 1D-myo-inositol 2-(L-cysteinylamino)-2-deoxy-alpha-D-glucopyranoside. Residues 256 to 258 (VGV) and 263 to 269 (QGSGLGR) each bind acetyl-CoA. Y290 is a binding site for 1D-myo-inositol 2-(L-cysteinylamino)-2-deoxy-alpha-D-glucopyranoside. Acetyl-CoA is bound at residue 295-300 (NRPAVQ).

The protein belongs to the acetyltransferase family. MshD subfamily. As to quaternary structure, monomer.

It catalyses the reaction 1D-myo-inositol 2-(L-cysteinylamino)-2-deoxy-alpha-D-glucopyranoside + acetyl-CoA = mycothiol + CoA + H(+). In terms of biological role, catalyzes the transfer of acetyl from acetyl-CoA to desacetylmycothiol (Cys-GlcN-Ins) to form mycothiol. The polypeptide is Mycothiol acetyltransferase (Thermobifida fusca (strain YX)).